A 563-amino-acid polypeptide reads, in one-letter code: Efflux pump notK (563 aa).

Residues 1–32 (MTKDEDSGTTDGGYSTPDIAVQEKQDQPPAPE) are disordered. A run of 14 helical transmembrane segments spans residues 48–68 (IFLS…AIPG), 78–98 (DVGW…PMWG), 108–128 (LVYL…AAAP), 138–158 (ALQG…ISYV), 165–185 (AMLI…GPLL), 197–217 (WCFW…VLFF), 239–259 (LPGF…LQWG), 270–290 (VIAT…VEWI), 312–332 (LYGW…PIYF), 345–365 (VNSL…GFLI), 374–394 (YEFA…TLDI), 406–426 (VIFG…LESF), 438–458 (VMLM…QSIF), and 509–529 (VFAF…AIPF). Residues 538–563 (GPSNGQEEEEGKKDGPAEKKEDEVAV) form a disordered region. The span at 547-563 (EGKKDGPAEKKEDEVAV) shows a compositional bias: basic and acidic residues.

The protein belongs to the major facilitator superfamily. TCR/Tet family.

It localises to the cell membrane. Functionally, efflux pump; part of the gene cluster that mediates the biosynthesis of notoamide, a fungal indole alkaloid that belongs to a family of natural products containing a characteristic bicyclo[2.2.2]diazaoctane core. This chain is Efflux pump notK, found in Aspergillus sp. (strain MF297-2).